Consider the following 688-residue polypeptide: Soluble guanylate cyclase gcy-35 (688 aa).

Position 105 (histidine 105) interacts with heme. The stretch at 358 to 401 (LNQSRMSQVELNRTLEETTKKLKKMAQELEIEKQKTDELLCELM) forms a coiled coil. The Guanylate cyclase domain maps to 424-552 (TLLFTDIVTF…DTVNVANKME (129 aa)). Mg(2+)-binding residues include aspartate 429 and aspartate 473. The disordered stretch occupies residues 644-688 (VENGNSAQNNHNNNNNTHHSGRKLMNGSSVDPGSHHIRSPTCTIS). Residues 646 to 659 (NGNSAQNNHNNNNN) show a composition bias toward low complexity.

It belongs to the adenylyl cyclase class-4/guanylyl cyclase family. As to quaternary structure, heterodimer; heterodimerizes with gcy-36, and possibly with other soluble guanylate cyclases. It depends on heme as a cofactor. As to expression, expressed in URX, AQR and PQR neurons. Also expressed in ALN, SDQ and BDU neurons, and variably in AVM, PLM and PLN neurons, pharyngeal and body wall muscles, and the excretory cell.

The protein resides in the cytoplasm. Its subcellular location is the cell projection. It localises to the dendrite. It carries out the reaction GTP = 3',5'-cyclic GMP + diphosphate. With respect to regulation, regulated by molecular oxygen, which binds to the heme binding site. Probably not activated by nitric oxide (NO). Its function is as follows. Plays a central role in social feeding behavior and oxygen sensation by synthesizing 3',5'-cyclic guanosine monophosphate (cGMP) from GTP. Oxygen, which binds to its heme-binding sites, probably regulates social behavior by modulating its activity. cGMP is a common second messenger in sensory transduction and is implicated in oxygen sensation. Indeed, C.elegans exhibits a strong behavioral preference for 5-12% oxygen, avoiding higher and lower oxygen levels; a higher level of oxygen inducing a naturally polymorphic social feeding behavior. Involved in avoidance of hyperoxia and for oxygen-induced aggregation and bordering, probably by mediating oxygen-sensing in URX, AQR and PQR sensory neurons. The protein is Soluble guanylate cyclase gcy-35 (gcy-35) of Caenorhabditis elegans.